The following is a 165-amino-acid chain: HTH-type transcriptional regulator MmpR5 (165 aa).

Residues 1-151 form the HTH marR-type domain; it reads MSVNDGVDQM…LLAYMENVVS (151 aa). Residues 53–76 constitute a DNA-binding region (H-T-H motif); that stretch reads SEELATALAASSGGISTNARMLIQ.

Homodimer.

Controls the expression level of the Mmps2-MmpL2, MmpS4-MmpL4, and MmpS5-MmpL5 transport systems. Also controls its own expression. Acts by binding directly to the promoter regions. The protein is HTH-type transcriptional regulator MmpR5 of Mycobacterium tuberculosis (strain ATCC 25618 / H37Rv).